The primary structure comprises 910 residues: Eukaryotic translation initiation factor 3 subunit C (910 aa).

A disordered region spans residues 1–21 (MSRFFANGSDSESESSEDEIQ). The span at 11 to 20 (SESESSEDEI) shows a compositional bias: acidic residues. Ser-34, Ser-165, Ser-176, and Ser-185 each carry phosphoserine. Residues 157–279 (FREAPDQESE…IRKRAEDDED (123 aa)) are disordered. Positions 162 to 186 (DQESEAEDEVVALESDGGDAGDDSD) are enriched in acidic residues. Residues 188–207 (GVKPTEAAPKAVKTAPAKAA) show a composition bias toward low complexity. Residues 209 to 235 (ADDDDSDDSIDWDSDSESETESSDDEN) are compositionally biased toward acidic residues. Basic and acidic residues predominate over residues 240–268 (MRERFLKRTTEKEEKDDDKRKDKRKEQKI). Residues 639–815 (FHMHINLELL…ETVVMHRSEP (177 aa)) enclose the PCI domain. The disordered stretch occupies residues 847-910 (FFQRGNMGNR…QQQVQTIDEE (64 aa)). A compositionally biased stretch (low complexity) spans 862–874 (NRNQNNQGGNWLG). Residues 882–891 (RNRNQRGHHK) show a composition bias toward basic residues. A compositionally biased stretch (low complexity) spans 895–910 (DRQQQQQQQVQTIDEE).

This sequence belongs to the eIF-3 subunit C family. Component of the eukaryotic translation initiation factor 3 (eIF-3) complex. The eIF-3 complex interacts with pix.

It localises to the cytoplasm. Component of the eukaryotic translation initiation factor 3 (eIF-3) complex, which is involved in protein synthesis of a specialized repertoire of mRNAs and, together with other initiation factors, stimulates binding of mRNA and methionyl-tRNAi to the 40S ribosome. The eIF-3 complex specifically targets and initiates translation of a subset of mRNAs involved in cell proliferation. The polypeptide is Eukaryotic translation initiation factor 3 subunit C (Drosophila erecta (Fruit fly)).